The primary structure comprises 614 residues: ATP-dependent rRNA helicase SPB4 (614 aa).

Residues 10 to 38 (WSVLKCDLHPWIKEAIKSLGYPTMTPVQA) carry the Q motif motif. Positions 41–233 (IPLFSGNKDV…RTGMANPVKI (193 aa)) constitute a Helicase ATP-binding domain. 54 to 61 (AVTGSGKT) contributes to the ATP binding site. The short motif at 181–184 (DEAD) is the DEAD box element. Residues 260–431 (KISALIALIK…KFQKKFRKYM (172 aa)) enclose the Helicase C-terminal domain. The stretch at 510-581 (EYADKQKEES…IEKQLMDDSS (72 aa)) forms a coiled coil. Residues 514 to 529 (KQKEESRKKNLEEDKA) show a composition bias toward basic and acidic residues. A disordered region spans residues 514–614 (KQKEESRKKN…DSMQGSFDDL (101 aa)). The segment covering 530–541 (RKVHDAKKRKEL) has biased composition (basic residues). Composition is skewed to basic and acidic residues over residues 551–563 (KTDK…ERRE) and 584–595 (EETKVDWKEMVK). A compositionally biased stretch (polar residues) spans 604 to 614 (SDSMQGSFDDL).

This sequence belongs to the DEAD box helicase family. DDX55/SPB4 subfamily. Component of pre-60S ribosomal complexes.

The protein localises to the nucleus. It localises to the nucleolus. The catalysed reaction is ATP + H2O = ADP + phosphate + H(+). In terms of biological role, ATP-binding RNA helicase involved in the biogenesis of 60S ribosomal subunits. Binds 90S pre-ribosomal particles and dissociates from pre-60S ribosomal particles after processing of 27SB pre-rRNA. Required for the normal formation of 18S rRNA through the processing of pre-rRNAs at sites A0, A1 and A2, and the normal formation of 25S and 5.8S rRNAs through the processing of pre-rRNAs at sites C1 and C2. The protein is ATP-dependent rRNA helicase SPB4 of Debaryomyces hansenii (strain ATCC 36239 / CBS 767 / BCRC 21394 / JCM 1990 / NBRC 0083 / IGC 2968) (Yeast).